We begin with the raw amino-acid sequence, 37 residues long: Large ribosomal subunit protein bL36 (37 aa).

The protein belongs to the bacterial ribosomal protein bL36 family.

This chain is Large ribosomal subunit protein bL36, found in Bordetella bronchiseptica (strain ATCC BAA-588 / NCTC 13252 / RB50) (Alcaligenes bronchisepticus).